A 78-amino-acid polypeptide reads, in one-letter code: Acyl carrier protein AcpP (78 aa).

A Carrier domain is found at 2-77 (SDIAERVKKI…DAVKFIEKAQ (76 aa)). Residue serine 37 is modified to O-(pantetheine 4'-phosphoryl)serine.

Belongs to the acyl carrier protein (ACP) family. In terms of processing, 4'-phosphopantetheine is transferred from CoA to a specific serine of apo-ACP by AcpS. This modification is essential for activity because fatty acids are bound in thioester linkage to the sulfhydryl of the prosthetic group.

The protein localises to the cytoplasm. It functions in the pathway lipid metabolism; fatty acid biosynthesis. In terms of biological role, carrier of the growing fatty acid chain in fatty acid biosynthesis. This is Acyl carrier protein AcpP from Agrobacterium fabrum (strain C58 / ATCC 33970) (Agrobacterium tumefaciens (strain C58)).